A 374-amino-acid polypeptide reads, in one-letter code: Queuine tRNA-ribosyltransferase (374 aa).

Aspartate 92 functions as the Proton acceptor in the catalytic mechanism. Substrate contacts are provided by residues 92–96 (DSGGY), aspartate 146, glutamine 193, and glycine 220. The segment at 251–257 (GVGKPDD) is RNA binding. The Nucleophile role is filled by aspartate 270. Positions 275–279 (TRSGR) are RNA binding; important for wobble base 34 recognition. Residues cysteine 308, cysteine 310, cysteine 313, and histidine 339 each coordinate Zn(2+).

This sequence belongs to the queuine tRNA-ribosyltransferase family. In terms of assembly, homodimer. Within each dimer, one monomer is responsible for RNA recognition and catalysis, while the other monomer binds to the replacement base PreQ1. The cofactor is Zn(2+).

The catalysed reaction is 7-aminomethyl-7-carbaguanine + guanosine(34) in tRNA = 7-aminomethyl-7-carbaguanosine(34) in tRNA + guanine. The protein operates within tRNA modification; tRNA-queuosine biosynthesis. In terms of biological role, catalyzes the base-exchange of a guanine (G) residue with the queuine precursor 7-aminomethyl-7-deazaguanine (PreQ1) at position 34 (anticodon wobble position) in tRNAs with GU(N) anticodons (tRNA-Asp, -Asn, -His and -Tyr). Catalysis occurs through a double-displacement mechanism. The nucleophile active site attacks the C1' of nucleotide 34 to detach the guanine base from the RNA, forming a covalent enzyme-RNA intermediate. The proton acceptor active site deprotonates the incoming PreQ1, allowing a nucleophilic attack on the C1' of the ribose to form the product. After dissociation, two additional enzymatic reactions on the tRNA convert PreQ1 to queuine (Q), resulting in the hypermodified nucleoside queuosine (7-(((4,5-cis-dihydroxy-2-cyclopenten-1-yl)amino)methyl)-7-deazaguanosine). This chain is Queuine tRNA-ribosyltransferase, found in Novosphingobium aromaticivorans (strain ATCC 700278 / DSM 12444 / CCUG 56034 / CIP 105152 / NBRC 16084 / F199).